A 956-amino-acid polypeptide reads, in one-letter code: DNA polymerase I (956 aa).

The 5'-3' exonuclease domain maps to 209–296; it reads VTVRQWVDYR…VTDLPLDIEF (88 aa).

This sequence belongs to the DNA polymerase type-A family. In terms of assembly, single-chain monomer with multiple functions.

It carries out the reaction DNA(n) + a 2'-deoxyribonucleoside 5'-triphosphate = DNA(n+1) + diphosphate. Its function is as follows. A DNA polymerase, required for DNA repair after DNA damage induced by ionizing radiation (IR); this is not the major DNA polymerase. Following severe irradiation (7 kGy of gamma irradiation) genomic DNA is fragmented. DNA is progressively degraded for the first 1.5 hours after IR, in a step promoted by RecA and counterbalanced by DNA Pol I and Pol III, followed by massive DNA synthesis and genome reassembly in the next hour. Optimal priming of DNA synthesis requires both RecA and RadA, Pol III initiates DNA synthesis while both Pol I and Pol III are required for its continuation. May also have 5'-3' exonuclease activity. The protein is DNA polymerase I (polA) of Deinococcus radiodurans (strain ATCC 13939 / DSM 20539 / JCM 16871 / CCUG 27074 / LMG 4051 / NBRC 15346 / NCIMB 9279 / VKM B-1422 / R1).